A 270-amino-acid chain; its full sequence is Glucosamine-6-phosphate deaminase (270 aa).

The active-site Proton acceptor; for enolization step is the aspartate 68. Aspartate 145 acts as the For ring-opening step in catalysis. The active-site Proton acceptor; for ring-opening step is the histidine 147. Catalysis depends on glutamate 152, which acts as the For ring-opening step.

The protein belongs to the glucosamine/galactosamine-6-phosphate isomerase family. NagB subfamily.

The catalysed reaction is alpha-D-glucosamine 6-phosphate + H2O = beta-D-fructose 6-phosphate + NH4(+). The protein operates within amino-sugar metabolism; N-acetylneuraminate degradation; D-fructose 6-phosphate from N-acetylneuraminate: step 5/5. Catalyzes the reversible isomerization-deamination of glucosamine 6-phosphate (GlcN6P) to form fructose 6-phosphate (Fru6P) and ammonium ion. This chain is Glucosamine-6-phosphate deaminase, found in Bifidobacterium longum (strain DJO10A).